A 592-amino-acid polypeptide reads, in one-letter code: MASTSRDVIAGRGIHSKVKSAKLLEVLNAMEEEESNNNREEIFIAPPDNAAGEFTDEDSGDEDSQRGAHLPGSVLHASVLCEDSGTGEDNDDLELQPAKKRQKAVVKPQRIWTKRDIRPDFGSWTASDPHIEDLKSQELSPVGLFELFFDEGTINFIVNETNRYAWQKNVNLSLTAQELKCVLGILILSGYISYPRRRMFWETSPDSHHHLVADAIRRDRFELIFSYLHFADNNELDASDRFAKVRPLIIRMNCNFQKHAPLEEFYSFGESMCEYFGHRGSKQLHRGKPVRLGYKIWCGTTSRGYLVWFEPSQGTLFTKPDRSLDLGGSMVIKFVDALQERGFLPYHIFFDKVFTSVKLMSILRKKGVKATGTVREYRTERCPLKDPKELKKMKRGSFDYKVDESEEIIVCRWHDSSVVNICSNAVGIEPVRLTSRHSGAAKTRTQVHQPSLVKLYQEKVGGVGRMDQNIAKYKVKIRGMKWYSSFIGYVIDAALNNAWQLHRICCQDAQVDLLAFRRYIACVYLESNADTTSQGRRSRRLETESRFDMIGHWIIHQDKRTRCALCHSQTNTRCEKCQKGVHAKCFREYHIR.

The segment at 31–69 (EEEESNNNREEIFIAPPDNAAGEFTDEDSGDEDSQRGAH) is disordered.

This is PiggyBac transposable element-derived protein 2 (PGBD2) from Homo sapiens (Human).